A 108-amino-acid chain; its full sequence is Small ribosomal subunit protein bS6 (108 aa).

Belongs to the bacterial ribosomal protein bS6 family.

Functionally, binds together with bS18 to 16S ribosomal RNA. In Trichormus variabilis (strain ATCC 29413 / PCC 7937) (Anabaena variabilis), this protein is Small ribosomal subunit protein bS6.